The sequence spans 422 residues: 3-isopropylmalate dehydratase large subunit (422 aa).

3 residues coordinate [4Fe-4S] cluster: Cys-303, Cys-363, and Cys-366.

This sequence belongs to the aconitase/IPM isomerase family. LeuC type 2 subfamily. Heterodimer of LeuC and LeuD. It depends on [4Fe-4S] cluster as a cofactor.

The catalysed reaction is (2R,3S)-3-isopropylmalate = (2S)-2-isopropylmalate. The protein operates within amino-acid biosynthesis; L-leucine biosynthesis; L-leucine from 3-methyl-2-oxobutanoate: step 2/4. Its function is as follows. Catalyzes the isomerization between 2-isopropylmalate and 3-isopropylmalate, via the formation of 2-isopropylmaleate. This chain is 3-isopropylmalate dehydratase large subunit, found in Wolinella succinogenes (strain ATCC 29543 / DSM 1740 / CCUG 13145 / JCM 31913 / LMG 7466 / NCTC 11488 / FDC 602W) (Vibrio succinogenes).